We begin with the raw amino-acid sequence, 218 residues long: Guanylate kinase (218 aa).

The region spanning 14-193 (GVMLVLSSPS…AFASVRAIVS (180 aa)) is the Guanylate kinase-like domain. Residue 21–28 (SPSGAGKS) coordinates ATP.

Belongs to the guanylate kinase family.

Its subcellular location is the cytoplasm. The enzyme catalyses GMP + ATP = GDP + ADP. Its function is as follows. Essential for recycling GMP and indirectly, cGMP. The chain is Guanylate kinase from Chelativorans sp. (strain BNC1).